The following is a 403-amino-acid chain: S-adenosylmethionine synthase (403 aa).

An ATP-binding site is contributed by H22. D24 contributes to the Mg(2+) binding site. Position 50 (E50) interacts with K(+). L-methionine is bound by residues E63 and Q107. The segment at 107–117 is flexible loop; the sequence is QSPDIAMGVDK. Residues 182–184, 248–249, D257, 263–264, A280, and K284 contribute to the ATP site; these read DAK, RF, and RK. Residue D257 coordinates L-methionine. Residue K288 participates in L-methionine binding.

This sequence belongs to the AdoMet synthase family. In terms of assembly, homotetramer; dimer of dimers. Mg(2+) is required as a cofactor. K(+) serves as cofactor.

It localises to the cytoplasm. The enzyme catalyses L-methionine + ATP + H2O = S-adenosyl-L-methionine + phosphate + diphosphate. The protein operates within amino-acid biosynthesis; S-adenosyl-L-methionine biosynthesis; S-adenosyl-L-methionine from L-methionine: step 1/1. Its function is as follows. Catalyzes the formation of S-adenosylmethionine (AdoMet) from methionine and ATP. The overall synthetic reaction is composed of two sequential steps, AdoMet formation and the subsequent tripolyphosphate hydrolysis which occurs prior to release of AdoMet from the enzyme. The protein is S-adenosylmethionine synthase of Chloroflexus aurantiacus (strain ATCC 29366 / DSM 635 / J-10-fl).